The chain runs to 214 residues: Germin-like protein 9-3 (214 aa).

An N-terminal signal peptide occupies residues 1–23; that stretch reads MASSILLLVVLAVVSAPVALVMA. N-linked (GlcNAc...) asparagine glycans are attached at residues N42, N60, and N69. A Cupin type-1 domain is found at 59–202; sequence MNMSMPMPNA…SFKTDVPTIQ (144 aa). Residues H104, H106, E111, and H150 each contribute to the Mn(2+) site.

It belongs to the germin family. Oligomer (believed to be a pentamer but probably hexamer).

It is found in the secreted. The protein resides in the extracellular space. The protein localises to the apoplast. Functionally, may play a role in plant defense. Probably has no oxalate oxidase activity even if the active site is conserved. This Oryza sativa subsp. japonica (Rice) protein is Germin-like protein 9-3.